The chain runs to 589 residues: MLLSVRGVPVEIPSLKDTKKSKGIIRSGWVMLKEDKMKYLPWTKKWLVLSSNSLSIYKGSKSESAQVTLLLKDIQKVERSKSRTFCFKLRFKSSTKNFEIQACELSVADNMECYEWMDLISSRALASKVSSPMNPKHQVHVGIDNEGNYVGLPKEWILLLQSSSITKQECMEEPKAVIQALDFYSKQLDTTSETKDSFSFCKETLPRSSTTSYSIRDADKHHKLTTSGVTKMNITERCKPKTTIQTDKKHIIRPFIEDKSHVESIMTGKVTKVPVKADSKNTLSRRMTDRQALAMLKDSVTSHDPVEYFNVKHKLGQGASGSVYLAKVVGGKQLGIFDSVAIKSIDLQCQTRKELILNEITVMRESIHPNIVTYLDSFLVRERHLWVVMEYMNAGSLTDIIEKSKLTEAQIARICLETCKGIQHLHARNIIHRDIKSDNVLLDNSGNIKITDFGFCARLSNRTNKRVTMVGTPYWMAPEVVKQNEYGTKVDIWSLGIMIIEMIENEPPYLREDPIRALYLIAKNGTPTLKKPNLVSKNLKSFLNSCLTIDTIFRATAAELLTHSFLNQACPTEDLKSIIFSRKANTHIN.

The region spanning 23–125 (GIIRSGWVML…WMDLISSRAL (103 aa)) is the PH domain. The 14-residue stretch at 129-142 (VSSPMNPKHQVHVG) folds into the CRIB domain. In terms of domain architecture, Protein kinase spans 309-566 (FNVKHKLGQG…AAELLTHSFL (258 aa)). ATP is bound by residues 315–323 (LGQGASGSV) and Lys-343. Residue Asp-434 is the Proton acceptor of the active site.

It belongs to the protein kinase superfamily. STE Ser/Thr protein kinase family. STE20 subfamily.

It catalyses the reaction L-seryl-[protein] + ATP = O-phospho-L-seryl-[protein] + ADP + H(+). It carries out the reaction L-threonyl-[protein] + ATP = O-phospho-L-threonyl-[protein] + ADP + H(+). Functionally, forms an activated complex with GTP-bound Ras-like cdc42. Participates in Ras-dependent morphological control and mating response pathways. This chain is Serine/threonine-protein kinase shk2 (shk2), found in Schizosaccharomyces pombe (strain 972 / ATCC 24843) (Fission yeast).